Here is a 32-residue protein sequence, read N- to C-terminus: Snake venom serine proteinase (32 aa).

The Peptidase S1 domain maps to 1 to 32 (VIGGDECDINEHRFLVFLTXASGLACGGTLIN).

The protein belongs to the peptidase S1 family. Snake venom subfamily. As to quaternary structure, monomer. Post-translationally, contains 6 disulfide bonds. Glycosylated. As to expression, expressed by the venom gland.

Its subcellular location is the secreted. Its function is as follows. Cleaves a kininogen analog with the release of kallidin (lysyl-bradykinin). Completely cleaves fibrinogen Aalpha chain, partially cleaves Bbeta chain and has no activity on gamma chain. The polypeptide is Snake venom serine proteinase (Bitis arietans (African puff adder)).